The primary structure comprises 427 residues: Adenylosuccinate synthetase (427 aa).

GTP is bound by residues 12–18 (GDEGKGK) and 40–42 (GHT). Residue D13 is the Proton acceptor of the active site. The Mg(2+) site is built by D13 and G40. Residues 13–16 (DEGK), 38–41 (NAGH), T130, R144, Q224, T239, and R303 contribute to the IMP site. H41 (proton donor) is an active-site residue. 299–305 (SVTGRPR) lines the substrate pocket. Residues R305, 331 to 333 (KLD), and 411 to 413 (SVG) each bind GTP.

This sequence belongs to the adenylosuccinate synthetase family. In terms of assembly, homodimer. Mg(2+) is required as a cofactor.

It localises to the cytoplasm. The enzyme catalyses IMP + L-aspartate + GTP = N(6)-(1,2-dicarboxyethyl)-AMP + GDP + phosphate + 2 H(+). The protein operates within purine metabolism; AMP biosynthesis via de novo pathway; AMP from IMP: step 1/2. Functionally, plays an important role in the de novo pathway of purine nucleotide biosynthesis. Catalyzes the first committed step in the biosynthesis of AMP from IMP. This Sorangium cellulosum (strain So ce56) (Polyangium cellulosum (strain So ce56)) protein is Adenylosuccinate synthetase.